The sequence spans 271 residues: MERRTVLITGCSQGGIGSALAEVFHQRGFHVFATARKTEKMKHLRDLDRMTLIPLDVTQESQISAAVELIQKHTGGTLDYLVNNAGDGYIIPVLDCDQLHGRQIFEVNFWGPLRMIQEFSPLLIAARGTIVNINSVASETLPLWLGIYSSSKAALLALSETLRLELKPFGVQVLSVMTGAVQTMIFQTNYRLPPDSAYMTWEKQIAAQAEGSEKASRMSATVYAERVVGDILNRQGGITYRGQMASFAYWVVALMPRFLRATPLLAQVGSQ.

NADP(+) contacts are provided by isoleucine 8, threonine 34, lysine 40, aspartate 56, asparagine 84, tyrosine 148, lysine 152, valine 181, and threonine 183. The active-site Proton acceptor is tyrosine 148. Lysine 152 acts as the Lowers pKa of active site Tyr in catalysis.

Belongs to the short-chain dehydrogenases/reductases (SDR) family.

It functions in the pathway secondary metabolite biosynthesis. Its function is as follows. Short-chain dehydrogenase; part of the gene cluster that mediates the biosynthesis of the indole diterpenes penitrems. The geranylgeranyl diphosphate (GGPP) synthase penG catalyzes the first step in penitrem biosynthesis via conversion of farnesyl pyrophosphate and isopentyl pyrophosphate into geranylgeranyl pyrophosphate (GGPP). Condensation of indole-3-glycerol phosphate with GGPP by the prenyl transferase penC then forms 3-geranylgeranylindole (3-GGI). Epoxidation by the FAD-dependent monooxygenase penM leads to a epoxidized-GGI that is substrate of the terpene cyclase penB for cyclization to yield paspaline. Paspaline is subsequently converted to 13-desoxypaxilline by the cytochrome P450 monooxygenase penP, the latter being then converted to paxilline by the cytochrome P450 monooxygenase penQ. Paxilline is converted to beta-paxitriol via C-10 ketoreduction by the short-chain dehydrogenase PC-15 which can be monoprenylated at the C-20 by the indole diterpene prenyltransferase penD. A two-step elimination (acetylation and elimination) process performed by the O-acetyltransferase PC-16 and the P.simplicissimum ptmI-ortholog not yet identified in P.crustosum, leads to the production of the prenylated form of penijanthine. The FAD-linked oxidoreductase ptmO then converts the prenylated form of penijanthine into PC-M5 which is in turn transformed into PC-M4 by the aromatic dimethylallyltransferase PC-22. A series of oxidation steps involving 4 cytochrome P450 monooxygenases (PC-21, PC-05, PC-23, PC-20) and a FAD-dependent monooxygenase (PC-14) are required for the transformation of PC-M4 to penitrems A and E. Synthesis of these final products is proposed to proceed via penitrems D and C (PC-21, PC-05, PC-14) and penitrems B and F (PC-21, PC-05, PC-14, PC-23). The chain is Short-chain dehydrogenase PC-15 from Penicillium crustosum (Blue mold fungus).